Consider the following 283-residue polypeptide: NFU1 iron-sulfur cluster scaffold homolog, mitochondrial (283 aa).

A mitochondrion-targeting transit peptide spans 1–30 (MSKFLSQAALNTLRNTRLGSRQLVRSFAGI). The nifU stretch occupies residues 182-250 (IKELLDTRIR…IPEVESVEQV (69 aa)). Residues Cys-219 and Cys-222 each coordinate [4Fe-4S] cluster.

This sequence belongs to the NifU family.

The protein localises to the mitochondrion. Functionally, molecular scaffold for [Fe-S] cluster assembly of mitochondrial iron-sulfur proteins. In Drosophila erecta (Fruit fly), this protein is NFU1 iron-sulfur cluster scaffold homolog, mitochondrial.